Consider the following 208-residue polypeptide: Uracil phosphoribosyltransferase (208 aa).

Residues arginine 78, arginine 103, and 130–138 each bind 5-phospho-alpha-D-ribose 1-diphosphate; that span reads DPMLATGGS. Uracil contacts are provided by residues isoleucine 193 and 198–200; that span reads GDA. A 5-phospho-alpha-D-ribose 1-diphosphate-binding site is contributed by aspartate 199.

Belongs to the UPRTase family. It depends on Mg(2+) as a cofactor.

The enzyme catalyses UMP + diphosphate = 5-phospho-alpha-D-ribose 1-diphosphate + uracil. Its pathway is pyrimidine metabolism; UMP biosynthesis via salvage pathway; UMP from uracil: step 1/1. With respect to regulation, allosterically activated by GTP. In terms of biological role, catalyzes the conversion of uracil and 5-phospho-alpha-D-ribose 1-diphosphate (PRPP) to UMP and diphosphate. This is Uracil phosphoribosyltransferase from Shewanella frigidimarina (strain NCIMB 400).